A 446-amino-acid chain; its full sequence is Gamma-glutamyl phosphate reductase (446 aa).

The protein belongs to the gamma-glutamyl phosphate reductase family.

The protein resides in the cytoplasm. It carries out the reaction L-glutamate 5-semialdehyde + phosphate + NADP(+) = L-glutamyl 5-phosphate + NADPH + H(+). Its pathway is amino-acid biosynthesis; L-proline biosynthesis; L-glutamate 5-semialdehyde from L-glutamate: step 2/2. Catalyzes the NADPH-dependent reduction of L-glutamate 5-phosphate into L-glutamate 5-semialdehyde and phosphate. The product spontaneously undergoes cyclization to form 1-pyrroline-5-carboxylate. In Sulfurihydrogenibium sp. (strain YO3AOP1), this protein is Gamma-glutamyl phosphate reductase.